The chain runs to 879 residues: Phosphoenolpyruvate carboxylase (879 aa).

Active-site residues include H138 and K545.

Belongs to the PEPCase type 1 family. Mg(2+) is required as a cofactor.

It catalyses the reaction oxaloacetate + phosphate = phosphoenolpyruvate + hydrogencarbonate. Its function is as follows. Forms oxaloacetate, a four-carbon dicarboxylic acid source for the tricarboxylic acid cycle. This chain is Phosphoenolpyruvate carboxylase, found in Haemophilus influenzae (strain 86-028NP).